The chain runs to 240 residues: Ubiquinone biosynthesis O-methyltransferase (240 aa).

R44, G64, D85, and M129 together coordinate S-adenosyl-L-methionine.

Belongs to the methyltransferase superfamily. UbiG/COQ3 family.

The catalysed reaction is a 3-demethylubiquinol + S-adenosyl-L-methionine = a ubiquinol + S-adenosyl-L-homocysteine + H(+). It catalyses the reaction a 3-(all-trans-polyprenyl)benzene-1,2-diol + S-adenosyl-L-methionine = a 2-methoxy-6-(all-trans-polyprenyl)phenol + S-adenosyl-L-homocysteine + H(+). Its pathway is cofactor biosynthesis; ubiquinone biosynthesis. In terms of biological role, O-methyltransferase that catalyzes the 2 O-methylation steps in the ubiquinone biosynthetic pathway. In Escherichia coli O7:K1 (strain IAI39 / ExPEC), this protein is Ubiquinone biosynthesis O-methyltransferase.